The chain runs to 241 residues: Sensory transduction protein LytT (241 aa).

The Response regulatory domain occupies 3 to 117; it reads RVLIVDDEML…RIQQTLKKYK (115 aa). 4-aspartylphosphate is present on aspartate 54. The HTH LytTR-type domain maps to 137–241; it reads LALSVGESIV…AKELKKLLHI (105 aa).

In terms of processing, phosphorylated by LytS.

The protein resides in the cytoplasm. In terms of biological role, member of the two-component regulatory system LytS/LytT that probably regulates genes involved in cell wall metabolism. The protein is Sensory transduction protein LytT (lytT) of Bacillus subtilis (strain 168).